Here is a 127-residue protein sequence, read N- to C-terminus: Glycine cleavage system H protein (127 aa).

Positions 22-104 (EVVIGITHFA…YEGAWMVKVE (83 aa)) constitute a Lipoyl-binding domain. Residue lysine 63 is modified to N6-lipoyllysine.

It belongs to the GcvH family. As to quaternary structure, the glycine cleavage system is composed of four proteins: P, T, L and H. The cofactor is (R)-lipoate.

The glycine cleavage system catalyzes the degradation of glycine. The H protein shuttles the methylamine group of glycine from the P protein to the T protein. Functionally, is also involved in protein lipoylation via its role as an octanoyl/lipoyl carrier protein intermediate. In Bacillus cereus (strain ATCC 10987 / NRS 248), this protein is Glycine cleavage system H protein.